Here is a 1226-residue protein sequence, read N- to C-terminus: Receptor-type tyrosine-protein phosphatase O (1226 aa).

An N-terminal signal peptide occupies residues Met-1–Thr-29. The Fibronectin type-III 1 domain occupies Phe-30–Leu-115. Residues Phe-30 to Val-832 lie on the Extracellular side of the membrane. N-linked (GlcNAc...) asparagine glycosylation is found at Asn-75, Asn-154, and Asn-227. The disordered stretch occupies residues Glu-242 to Ser-305. Basic and acidic residues predominate over residues Ile-260–Glu-270. Residues Pro-277–Ser-291 are compositionally biased toward low complexity. An N-linked (GlcNAc...) asparagine glycan is attached at Asn-279. Residues Pro-296 to Ser-305 are compositionally biased toward polar residues. 5 consecutive Fibronectin type-III domains span residues Arg-339 to Thr-435, Lys-445 to Thr-541, Gly-542 to Phe-638, Ala-641 to Ala-734, and Pro-735 to Asn-827. N-linked (GlcNAc...) asparagine glycans are attached at residues Asn-471 and Asn-500. Residues Asn-710, Asn-743, and Asn-800 are each glycosylated (N-linked (GlcNAc...) asparagine). The chain crosses the membrane as a helical span at residues Ile-833 to Ile-853. At Leu-854–Ser-1226 the chain is on the cytoplasmic side. The residue at position 875 (Ser-875) is a Phosphoserine. The region spanning Phe-948 to Met-1205 is the Tyrosine-protein phosphatase domain. Residues Asp-1112, Cys-1146 to Arg-1152, and Gln-1190 each bind substrate. Catalysis depends on Cys-1146, which acts as the Phosphocysteine intermediate. Tyr-1220 carries the post-translational modification Phosphotyrosine.

This sequence belongs to the protein-tyrosine phosphatase family. Receptor class 3 subfamily. Interacts (phosphorylated form) with FYN and GRB2.

The protein localises to the membrane. The enzyme catalyses O-phospho-L-tyrosyl-[protein] + H2O = L-tyrosyl-[protein] + phosphate. Functionally, possesses tyrosine phosphatase activity. Plays a role in regulating the glomerular pressure/filtration rate relationship through an effect on podocyte structure and function. This Mus musculus (Mouse) protein is Receptor-type tyrosine-protein phosphatase O (Ptpro).